A 237-amino-acid chain; its full sequence is MFLTRTEYDRGVNTFSPEGRLFQVEYAIEAIKLGSTAIGVKTKEGVVLAVEKRITSPLLEPSSVEKIMEIDDHIGCAMSGLIADARTLVEHARVETQNHRFSYGEPMTVESTTQALCDLALRFGEGEEESMSRPFGVSLLIAGHDENGPSLYYTDPSGTFWQCNAKAIGSGSEGADSSLQEQFNKDITLQEAETIAVSILKQVMEEKVTPNNVDIAKVAPAYHLYTPQEVEAVISRL.

An N-acetylmethionine modification is found at methionine 1. Residues lysine 43, lysine 66, and lysine 185 each participate in a glycyl lysine isopeptide (Lys-Gly) (interchain with G-Cter in ubiquitin) cross-link.

This sequence belongs to the peptidase T1A family. As to quaternary structure, component of the 20S core complex of the 26S proteasome. The 26S proteasome is composed of a core protease (CP), known as the 20S proteasome, capped at one or both ends by the 19S regulatory particle (RP/PA700). The 20S proteasome core is composed of 28 subunits that are arranged in four stacked rings, resulting in a barrel-shaped structure. The two end rings are each formed by seven alpha subunits, and the two central rings are each formed by seven beta subunits. The catalytic chamber with the active sites is on the inside of the barrel.

The protein localises to the cytoplasm. The protein resides in the nucleus. The proteasome is a multicatalytic proteinase complex which is characterized by its ability to cleave peptides with Arg, Phe, Tyr, Leu, and Glu adjacent to the leaving group at neutral or slightly basic pH. The proteasome has an ATP-dependent proteolytic activity. This chain is Proteasome subunit alpha type-5-B (PAE2), found in Arabidopsis thaliana (Mouse-ear cress).